The following is a 353-amino-acid chain: MPRAQLPEDSSAVDMDILFPLDSVIGTELCPSPIPQIIHFVLFVVFSLVILIILRLYIPREPSSVPPREEDSENDQAEVGEWLRIGNKYITLKDYRILLKELENLEIYTFLSKKCLKKLSREGSSHHLPRQVRPGPVYKPAPARNHRPRGGRGKASPTSFHVSPRAPLAPLASMPSSVPKTSVESLGSPSSLSSSKPREPLCPLKHPSHQPPASTLSPNPTSSTESLGYLSSLSSSQPPEPLRPLKHPSHKPRGRSLPRRRNPGWVSWSDSMQADSETDTIICPMCKAPERSCPHTWWVPSSPRVIRGVGRCSDPNLGLSWRQEAARAWCHCTSSQFPFKHPNLPTHLPKASF.

A helical membrane pass occupies residues 34-54 (IPQIIHFVLFVVFSLVILIIL). A disordered region spans residues 122-271 (EGSSHHLPRQ…NPGWVSWSDS (150 aa)). Residues 182–195 (SVESLGSPSSLSSS) show a composition bias toward low complexity. Over residues 211–221 (PPASTLSPNPT) the composition is skewed to polar residues. Residues 222 to 237 (SSTESLGYLSSLSSSQ) are compositionally biased toward low complexity. Basic residues predominate over residues 244–262 (PLKHPSHKPRGRSLPRRRN).

Belongs to the SPATA31 family.

It is found in the membrane. This chain is Putative protein SPATA31J1, found in Homo sapiens (Human).